The primary structure comprises 336 residues: Phosphoribosylformylglycinamidine cyclo-ligase (336 aa).

It belongs to the AIR synthase family.

The protein resides in the cytoplasm. It carries out the reaction 2-formamido-N(1)-(5-O-phospho-beta-D-ribosyl)acetamidine + ATP = 5-amino-1-(5-phospho-beta-D-ribosyl)imidazole + ADP + phosphate + H(+). Its pathway is purine metabolism; IMP biosynthesis via de novo pathway; 5-amino-1-(5-phospho-D-ribosyl)imidazole from N(2)-formyl-N(1)-(5-phospho-D-ribosyl)glycinamide: step 2/2. This is Phosphoribosylformylglycinamidine cyclo-ligase from Thermoanaerobacter pseudethanolicus (strain ATCC 33223 / 39E) (Clostridium thermohydrosulfuricum).